Reading from the N-terminus, the 308-residue chain is Mannan endo-1,4-beta-mannosidase (308 aa).

Glu125 (proton donor) is an active-site residue. Glu220 acts as the Nucleophile in catalysis. The tract at residues 284-308 (DGLQETSKPSTVFTDDNGGHPEPPT) is disordered. A compositionally biased stretch (polar residues) spans 287-297 (QETSKPSTVFT).

It belongs to the glycosyl hydrolase 5 (cellulase A) family.

It carries out the reaction Random hydrolysis of (1-&gt;4)-beta-D-mannosidic linkages in mannans, galactomannans and glucomannans.. Functionally, catalyzes the endo hydrolysis of beta-1,4-linked mannan, galactomannan and glucomannan. It is able to hydrolyze mannosidic linkages that are flanked by mannose or glucose. The polypeptide is Mannan endo-1,4-beta-mannosidase (Salipaludibacillus agaradhaerens (Bacillus agaradhaerens)).